The following is a 349-amino-acid chain: 6-phosphogluconolactonase (349 aa).

Positions 125-151 (LQSPVSEAAHTGKGPHERQEKPHTHYA) are disordered. The span at 138–147 (GPHERQEKPH) shows a compositional bias: basic and acidic residues.

This sequence belongs to the cycloisomerase 2 family.

The enzyme catalyses 6-phospho-D-glucono-1,5-lactone + H2O = 6-phospho-D-gluconate + H(+). It functions in the pathway carbohydrate degradation; pentose phosphate pathway; D-ribulose 5-phosphate from D-glucose 6-phosphate (oxidative stage): step 2/3. In terms of biological role, catalyzes the hydrolysis of 6-phosphogluconolactone to 6-phosphogluconate. The polypeptide is 6-phosphogluconolactonase (pgl) (Bacillus subtilis (strain 168)).